The following is a 331-amino-acid chain: Zinc finger protein 660 (331 aa).

Positions 1 to 12 (MRRKTRNFKHKT) are enriched in basic residues. The interval 1 to 35 (MRRKTRNFKHKTVKDNKVLTEGSDQESEKDNSQCC) is disordered. S23 is modified (phosphoserine). 10 consecutive C2H2-type zinc fingers follow at residues 50 to 72 (YVCT…ERIH), 78 to 100 (YKCK…RRIH), 106 to 128 (YTCS…QGIH), 134 to 156 (YECK…HRVH), 162 to 184 (YSCI…QRMH), 190 to 212 (YKCK…QRIH), 218 to 240 (YECD…QRLH), 246 to 268 (YKCN…QRVH), 274 to 296 (YKCN…LRTH), and 302 to 324 (YKCS…QRKH).

Belongs to the krueppel C2H2-type zinc-finger protein family.

It is found in the nucleus. Functionally, may be involved in transcriptional regulation. This is Zinc finger protein 660 (ZNF660) from Homo sapiens (Human).